Here is a 491-residue protein sequence, read N- to C-terminus: Protein phosphatase ppm-1.G (491 aa).

Residues 23-486 (SYACTTMQGW…DNMTVICTTF (464 aa)) form the PPM-type phosphatase domain. Mn(2+) contacts are provided by aspartate 57 and glycine 58. The segment covering 112–125 (KDIGDEGKPKKAGG) has biased composition (basic and acidic residues). Disordered stretches follow at residues 112 to 136 (KDIGDEGKPKKAGGEADSEDEADRI) and 170 to 294 (GDVS…EEMV). Composition is skewed to acidic residues over residues 173–192 (SDDSEDEDEDEEEAEEQDDT) and 260–294 (ATEEEDEDDSDKEFVADEEEDDEDAEDEQSDEEMV). Residues aspartate 428 and aspartate 477 each coordinate Mn(2+).

This sequence belongs to the PP2C family. The cofactor is Mg(2+). Mn(2+) serves as cofactor.

It carries out the reaction O-phospho-L-seryl-[protein] + H2O = L-seryl-[protein] + phosphate. The catalysed reaction is O-phospho-L-threonyl-[protein] + H2O = L-threonyl-[protein] + phosphate. The protein is Protein phosphatase ppm-1.G of Caenorhabditis elegans.